The primary structure comprises 865 residues: MALVLGSLLLLGLCGNSFSGGQPSSTDAPKAWNYELPATNYETQDSHKAGPIGILFELVHIFLYVVQPRDFPEDTLRKFLQKAYESKIDYDKPETVILGLKIVYYEAGIILCCVLGLLFIILMPLVGYFFCMCRCCNKCGGEMHQRQKENGPFLRKCFAISLLVICIIISIGIFYGFVANHQVRTRIKRSRKLADSNFKDLRTLLNETPEQIKYILAQYNTTKDKAFTDLNSINSVLGGGILDRLRPNIIPVLDEIKSMATAIKETKEALENMNSTLKSLHQQSTQLSSSLTSVKTSLRSSLNDPLCLVHPSSETCNSIRLSLSQLNSNPELRQLPPVDAELDNVNNVLRTDLDGLVQQGYQSLNDIPDRVQRQTTTVVAGIKRVLNSIGSDIDNVTQRLPIQDILSAFSVYVNNTESYIHRNLPTLEEYDSYWWLGGLVICSLLTLIVIFYYLGLLCGVCGYDRHATPTTRGCVSNTGGVFLMVGVGLSFLFCWILMIIVVLTFVFGANVEKLICEPYTSKELFRVLDTPYLLNEDWEYYLSGKLFNKSKMKLTFEQVYSDCKKNRGTYGTLHLQNSFNISEHLNINEHTGSISSELESLKVNLNIFLLGAAGRKNLQDFAACGIDRMNYDSYLAQTGKSPAGVNLLSFAYDLEAKANSLPPGNLRNSLKRDAQTIKTIHQQRVLPIEQSLSTLYQSVKILQRTGNGLLERVTRILASLDFAQNFITNNTSSVIIEETKKYGRTIIGYFEHYLQWIEFSISEKVASCKPVATALDTAVDVFLCSYIIDPLNLFWFGIGKATVFLLPALIFAVKLAKYYRRMDSEDVYDDVETIPMKNMENGNNGYHKDHVYGIHNPVMTSPSQH.

The N-terminal stretch at 1–19 (MALVLGSLLLLGLCGNSFS) is a signal peptide. Residues 20-108 (GGQPSSTDAP…GLKIVYYEAG (89 aa)) lie on the Extracellular side of the membrane. A helical membrane pass occupies residues 109 to 129 (IILCCVLGLLFIILMPLVGYF). The Cytoplasmic portion of the chain corresponds to 130–157 (FCMCRCCNKCGGEMHQRQKENGPFLRKC). A helical membrane pass occupies residues 158-178 (FAISLLVICIIISIGIFYGFV). The Extracellular portion of the chain corresponds to 179–433 (ANHQVRTRIK…LPTLEEYDSY (255 aa)). N220 carries N-linked (GlcNAc...) asparagine glycosylation. 3 positions are modified to N6-acetyllysine: K225, K257, and K264. 3 N-linked (GlcNAc...) asparagine glycosylation sites follow: N274, N395, and N414. Residues 434–454 (WWLGGLVICSLLTLIVIFYYL) traverse the membrane as a helical segment. The Cytoplasmic segment spans residues 455 to 486 (GLLCGVCGYDRHATPTTRGCVSNTGGVFLMVG). A helical membrane pass occupies residues 487–507 (VGLSFLFCWILMIIVVLTFVF). Topologically, residues 508–792 (GANVEKLICE…LCSYIIDPLN (285 aa)) are extracellular. N548, N580, N729, and N730 each carry an N-linked (GlcNAc...) asparagine glycan. A helical membrane pass occupies residues 793 to 813 (LFWFGIGKATVFLLPALIFAV). Topologically, residues 814–865 (KLAKYYRRMDSEDVYDDVETIPMKNMENGNNGYHKDHVYGIHNPVMTSPSQH) are cytoplasmic. S863 carries the phosphoserine modification.

Belongs to the prominin family. As to quaternary structure, interacts with CDHR1 and with actin filaments. Interacts with NAT8 and NAT8B. Post-translationally, isoform 1 and isoform 2 are glycosylated. Acetylation at Lys-225, Lys-257 and Lys-264 by NAT8 and NAT8B may control PROM1 protein expression and its function in cell apoptosis. As to expression, isoform 1 is selectively expressed on CD34 hematopoietic stem and progenitor cells in adult and fetal bone marrow, fetal liver, cord blood and adult peripheral blood. Isoform 1 is not detected on other blood cells. Isoform 1 is also expressed in a number of non-lymphoid tissues including retina, pancreas, placenta, kidney, liver, lung, brain and heart. Found in saliva within small membrane particles. Isoform 2 is predominantly expressed in fetal liver, skeletal muscle, kidney, and heart as well as adult pancreas, kidney, liver, lung, and placenta. Isoform 2 is highly expressed in fetal liver, low in bone marrow, and barely detectable in peripheral blood. Isoform 2 is expressed on hematopoietic stem cells and in epidermal basal cells (at protein level). Expressed in adult retina by rod and cone photoreceptor cells (at protein level).

It localises to the apical cell membrane. The protein resides in the cell projection. The protein localises to the microvillus membrane. Its subcellular location is the cilium. It is found in the photoreceptor outer segment. It localises to the endoplasmic reticulum. The protein resides in the endoplasmic reticulum-Golgi intermediate compartment. Functionally, may play a role in cell differentiation, proliferation and apoptosis. Binds cholesterol in cholesterol-containing plasma membrane microdomains and may play a role in the organization of the apical plasma membrane in epithelial cells. During early retinal development acts as a key regulator of disk morphogenesis. Involved in regulation of MAPK and Akt signaling pathways. In neuroblastoma cells suppresses cell differentiation such as neurite outgrowth in a RET-dependent manner. The chain is Prominin-1 (PROM1) from Homo sapiens (Human).